Consider the following 370-residue polypeptide: Phosphoserine aminotransferase (370 aa).

Met-1 is subject to N-acetylmethionine. O-phospho-L-serine-binding residues include His-44 and Arg-45. Lys-51 carries the N6-acetyllysine modification. Positions 79, 80, and 107 each coordinate pyridoxal 5'-phosphate. Lys-127 is subject to N6-acetyllysine. The pyridoxal 5'-phosphate site is built by Thr-156, Asp-176, and Gln-199. Lys-200 bears the N6-(pyridoxal phosphate)lysine mark. Positions 241 and 242 each coordinate pyridoxal 5'-phosphate. An N6-acetyllysine mark is found at Lys-269, Lys-318, and Lys-323. Ser-331 carries the phosphoserine modification. Residue Lys-333 is modified to N6-acetyllysine. Residues His-335, Arg-336, and Arg-342 each coordinate O-phospho-L-serine.

Belongs to the class-V pyridoxal-phosphate-dependent aminotransferase family. SerC subfamily. In terms of assembly, homodimer. It depends on pyridoxal 5'-phosphate as a cofactor. As to expression, expressed at high levels in the brain, liver, kidney and pancreas, and very weakly expressed in the thymus, prostate, testis and colon.

It catalyses the reaction O-phospho-L-serine + 2-oxoglutarate = 3-phosphooxypyruvate + L-glutamate. It functions in the pathway amino-acid biosynthesis; L-serine biosynthesis; L-serine from 3-phospho-D-glycerate: step 2/3. Phosphoserine transaminase activity is strongly stimulated by increasing the ionic strength. Involved in L-serine biosynthesis via the phosphorylated pathway, a three-step pathway converting the glycolytic intermediate 3-phospho-D-glycerate into L-serine. Catalyzes the second step, that is the pyridoxal 5'-phosphate-dependent transamination of 3-phosphohydroxypyruvate and L-glutamate to O-phosphoserine (OPS) and alpha-ketoglutarate. This Homo sapiens (Human) protein is Phosphoserine aminotransferase.